Reading from the N-terminus, the 254-residue chain is uncharacterized protein (254 aa).

The protein belongs to the methyltransferase superfamily.

This is an uncharacterized protein from Mycobacterium bovis (strain ATCC BAA-935 / AF2122/97).